A 577-amino-acid polypeptide reads, in one-letter code: Secreted LysM effector Lys4 (577 aa).

The signal sequence occupies residues 1–19; it reads MRALTAAVLFVAGLTPVLA. One can recognise a LysM 1 domain in the interval 38-85; it reads AWYTIVKGDGCDTVEKKFKITPEQFFKWNPDVSTDCVKNFWVGNSYCV. A compositionally biased stretch (low complexity) spans 96–121; the sequence is TSTTVKSSSTTQKTSSTSSKLSSSSK. Residues 96-135 are disordered; it reads TSTTVKSSSTTQKTSSTSSKLSSSSKPVNTTTTPYSTRNP. Residues 122–135 show a composition bias toward polar residues; sequence PVNTTTTPYSTRNP. N124, N140, N216, and N235 each carry an N-linked (GlcNAc...) asparagine glycan. LysM domains lie at 251–298, 328–375, and 408–455; these read NFYQ…YYCV, KWYQ…WYCV, and QYWL…YVCV. Positions 464–485 are enriched in low complexity; sequence SGSTTTITGPPTKGSNPPTTTT. The interval 464 to 490 is disordered; that stretch reads SGSTTTITGPPTKGSNPPTTTTSGGGG. The 49-residue stretch at 510–558 folds into the LysM 5 domain; the sequence is FWFRGKDGASLFCADIAKDAGVSLPDFLKWNPGVGSNCESLWADTWYCV.

This sequence belongs to the secreted LysM effector family.

Might have a role in sequestration of chitin oligosaccharides (breakdown products of fungal cell walls that are released during invasion and act as triggers of host immunity) to dampen host defense. This chain is Secreted LysM effector Lys4, found in Pochonia chlamydosporia (strain 123) (Metacordyceps chlamydosporia).